The chain runs to 89 residues: Small ribosomal subunit protein uS17 (89 aa).

It belongs to the universal ribosomal protein uS17 family. In terms of assembly, part of the 30S ribosomal subunit.

Functionally, one of the primary rRNA binding proteins, it binds specifically to the 5'-end of 16S ribosomal RNA. This chain is Small ribosomal subunit protein uS17, found in Coxiella burnetii (strain RSA 331 / Henzerling II).